Consider the following 249-residue polypeptide: Metallo-beta-lactamase type 2 (249 aa).

The N-terminal stretch at 1–22 is a signal peptide; sequence MLKKIKISLILALGLTSLQAFG. 5 residues coordinate Zn(2+): H98, H100, D102, H161, and C180. A substrate-binding site is contributed by K183. Position 222 (H222) interacts with Zn(2+).

Belongs to the metallo-beta-lactamase superfamily. Class-B beta-lactamase family. As to quaternary structure, monomer. Zn(2+) serves as cofactor.

The protein resides in the periplasm. It catalyses the reaction a beta-lactam + H2O = a substituted beta-amino acid. In terms of biological role, confers resistance to the different beta-lactams antibiotics (penicillin, cephalosporin and carbapenem) via the hydrolysis of the beta-lactam ring. The chain is Metallo-beta-lactamase type 2 (blaB3) from Elizabethkingia meningoseptica (Chryseobacterium meningosepticum).